Here is a 488-residue protein sequence, read N- to C-terminus: Protein nucleotidyltransferase YdiU (488 aa).

8 residues coordinate ATP: Gly91, Gly93, Arg94, Lys114, Asp126, Gly127, Arg177, and Arg184. Asp253 functions as the Proton acceptor in the catalytic mechanism. Asn254 and Asp263 together coordinate Mg(2+). Residue Asp263 participates in ATP binding.

This sequence belongs to the SELO family. Requires Mg(2+) as cofactor. Mn(2+) is required as a cofactor.

It catalyses the reaction L-seryl-[protein] + ATP = 3-O-(5'-adenylyl)-L-seryl-[protein] + diphosphate. It carries out the reaction L-threonyl-[protein] + ATP = 3-O-(5'-adenylyl)-L-threonyl-[protein] + diphosphate. The enzyme catalyses L-tyrosyl-[protein] + ATP = O-(5'-adenylyl)-L-tyrosyl-[protein] + diphosphate. The catalysed reaction is L-histidyl-[protein] + UTP = N(tele)-(5'-uridylyl)-L-histidyl-[protein] + diphosphate. It catalyses the reaction L-seryl-[protein] + UTP = O-(5'-uridylyl)-L-seryl-[protein] + diphosphate. It carries out the reaction L-tyrosyl-[protein] + UTP = O-(5'-uridylyl)-L-tyrosyl-[protein] + diphosphate. Functionally, nucleotidyltransferase involved in the post-translational modification of proteins. It can catalyze the addition of adenosine monophosphate (AMP) or uridine monophosphate (UMP) to a protein, resulting in modifications known as AMPylation and UMPylation. The sequence is that of Protein nucleotidyltransferase YdiU from Bacillus cereus (strain AH187).